Consider the following 193-residue polypeptide: Probable molybdenum cofactor guanylyltransferase (193 aa).

GTP is bound by residues 9-11, Lys-21, Asp-64, and Asp-93; that span reads TAG. Residue Asp-93 coordinates Mg(2+).

It belongs to the MobA family. Requires Mg(2+) as cofactor.

The protein resides in the cytoplasm. The catalysed reaction is Mo-molybdopterin + GTP + H(+) = Mo-molybdopterin guanine dinucleotide + diphosphate. Its function is as follows. Transfers a GMP moiety from GTP to Mo-molybdopterin (Mo-MPT) cofactor (Moco or molybdenum cofactor) to form Mo-molybdopterin guanine dinucleotide (Mo-MGD) cofactor. This Deinococcus radiodurans (strain ATCC 13939 / DSM 20539 / JCM 16871 / CCUG 27074 / LMG 4051 / NBRC 15346 / NCIMB 9279 / VKM B-1422 / R1) protein is Probable molybdenum cofactor guanylyltransferase.